The primary structure comprises 69 residues: Toxin Tma3 (69 aa).

The region spanning 2–66 (KDDYPVDTAK…SPTKKSGRCN (65 aa)) is the LCN-type CS-alpha/beta domain. Disulfide bonds link Cys14-Cys65, Cys18-Cys41, Cys27-Cys48, and Cys31-Cys50.

This sequence belongs to the long (4 C-C) scorpion toxin superfamily. Sodium channel inhibitor family. As to expression, expressed by the venom gland.

The protein resides in the secreted. Functionally, inhibits voltage-gated sodium channels (Nav). This toxin shows insect lethality against crickets. The polypeptide is Toxin Tma3 (Tityus macrochirus (Scorpion)).